A 67-amino-acid polypeptide reads, in one-letter code: Small ribosomal subunit protein bS21 (67 aa).

This sequence belongs to the bacterial ribosomal protein bS21 family.

This Desulfovibrio desulfuricans (strain ATCC 27774 / DSM 6949 / MB) protein is Small ribosomal subunit protein bS21.